The sequence spans 552 residues: CTP synthase (552 aa).

The tract at residues 1 to 273 is amidoligase domain; the sequence is MSESKKNPET…LTPIARRFNM (273 aa). CTP is bound at residue Ser-21. Ser-21 is a UTP binding site. Residues 22 to 27 and Asp-79 each bind ATP; that span reads SLGKGI. 2 residues coordinate Mg(2+): Asp-79 and Glu-147. Residues 154 to 156, 194 to 199, and Lys-230 each bind CTP; these read DIE and KTKPTQ. UTP is bound by residues 194–199 and Lys-230; that span reads KTKPTQ. One can recognise a Glutamine amidotransferase type-1 domain in the interval 298 to 548; that stretch reads TIAFVGKYLS…IQKSLELKKV (251 aa). Gly-359 contacts L-glutamine. The active-site Nucleophile; for glutamine hydrolysis is the Cys-386. L-glutamine-binding positions include 387–390, Glu-410, and Arg-478; that span reads LGMQ. Catalysis depends on residues His-521 and Glu-523.

It belongs to the CTP synthase family. Homotetramer.

The enzyme catalyses UTP + L-glutamine + ATP + H2O = CTP + L-glutamate + ADP + phosphate + 2 H(+). The catalysed reaction is L-glutamine + H2O = L-glutamate + NH4(+). It carries out the reaction UTP + NH4(+) + ATP = CTP + ADP + phosphate + 2 H(+). It functions in the pathway pyrimidine metabolism; CTP biosynthesis via de novo pathway; CTP from UDP: step 2/2. Allosterically activated by GTP, when glutamine is the substrate; GTP has no effect on the reaction when ammonia is the substrate. The allosteric effector GTP functions by stabilizing the protein conformation that binds the tetrahedral intermediate(s) formed during glutamine hydrolysis. Inhibited by the product CTP, via allosteric rather than competitive inhibition. Functionally, catalyzes the ATP-dependent amination of UTP to CTP with either L-glutamine or ammonia as the source of nitrogen. Regulates intracellular CTP levels through interactions with the four ribonucleotide triphosphates. This is CTP synthase from Wolinella succinogenes (strain ATCC 29543 / DSM 1740 / CCUG 13145 / JCM 31913 / LMG 7466 / NCTC 11488 / FDC 602W) (Vibrio succinogenes).